The following is a 149-amino-acid chain: 3-hydroxyacyl-[acyl-carrier-protein] dehydratase FabZ (149 aa).

Histidine 53 is a catalytic residue.

It belongs to the thioester dehydratase family. FabZ subfamily.

It is found in the cytoplasm. The enzyme catalyses a (3R)-hydroxyacyl-[ACP] = a (2E)-enoyl-[ACP] + H2O. Its function is as follows. Involved in unsaturated fatty acids biosynthesis. Catalyzes the dehydration of short chain beta-hydroxyacyl-ACPs and long chain saturated and unsaturated beta-hydroxyacyl-ACPs. This is 3-hydroxyacyl-[acyl-carrier-protein] dehydratase FabZ from Neisseria meningitidis serogroup B (strain ATCC BAA-335 / MC58).